Consider the following 149-residue polypeptide: Small ribosomal subunit protein uS15 (149 aa).

Over residues 1 to 14 (MGRMHTHRHGKSHS) the composition is skewed to basic residues. The tract at residues 1–20 (MGRMHTHRHGKSHSIRPATL) is disordered.

Belongs to the universal ribosomal protein uS15 family. As to quaternary structure, part of the 30S ribosomal subunit.

This is Small ribosomal subunit protein uS15 from Nitrosopumilus maritimus (strain SCM1).